Consider the following 283-residue polypeptide: 4-diphosphocytidyl-2-C-methyl-D-erythritol kinase (283 aa).

Lys10 is an active-site residue. 94 to 104 (PVAAGLAGGSS) is a binding site for ATP. Asp136 is a catalytic residue.

Belongs to the GHMP kinase family. IspE subfamily.

It catalyses the reaction 4-CDP-2-C-methyl-D-erythritol + ATP = 4-CDP-2-C-methyl-D-erythritol 2-phosphate + ADP + H(+). It functions in the pathway isoprenoid biosynthesis; isopentenyl diphosphate biosynthesis via DXP pathway; isopentenyl diphosphate from 1-deoxy-D-xylulose 5-phosphate: step 3/6. Catalyzes the phosphorylation of the position 2 hydroxy group of 4-diphosphocytidyl-2C-methyl-D-erythritol. The protein is 4-diphosphocytidyl-2-C-methyl-D-erythritol kinase of Enterococcus faecalis (strain ATCC 700802 / V583).